We begin with the raw amino-acid sequence, 722 residues long: Solute carrier organic anion transporter family member 4A1 (722 aa).

The disordered stretch occupies residues 1–52 (MPLHQLGDKPLTFPSPNSAMENGLDHTPPSRRASPGTPLSPGSLRSAAHSPL). Residues 1-103 (MPLHQLGDKP…PCLQVLNTPK (103 aa)) lie on the Cytoplasmic side of the membrane. At S34 the chain carries Phosphoserine. At T37 the chain carries Phosphothreonine. S40, S43, S46, and S50 each carry phosphoserine. A helical transmembrane segment spans residues 104–124 (GILFFLCAAAFLQGMTVNGFI). Over 125 to 143 (NTVITSLERRYDLHSYQSG) the chain is Extracellular. A helical membrane pass occupies residues 144-164 (LIASSYDIAACLCLTFVSYFG). Over 165 to 170 (GSGHKP) the chain is Cytoplasmic. Residues 171–195 (RWLGWGVLLMGTGSLVFALPHFTAG) form a helical membrane-spanning segment. Over 196-222 (RYEVELDAGVRTCPANPGAVCADSTSG) the chain is Extracellular. Residues 223–253 (LSRYQLVFMLGQFLHGVGATPLYTLGVTYLD) traverse the membrane as a helical segment. At 254 to 272 (ENVKSSCSPVYIAIFYTAA) the chain is on the cytoplasmic side. A helical transmembrane segment spans residues 273–293 (ILGPAAGYLIGGALLNIYTEM). The Extracellular segment spans residues 294 to 307 (GRRTELTTESPLWV). The chain crosses the membrane as a helical span at residues 308–332 (GAWWVGFLGSGAAAFFTAVPILGYP). Over 333–378 (RQLPGSQRYAVMRAAEMHQLKDSSRGEASNPDFGKTIRDLPLSIWL) the chain is Cytoplasmic. The helical transmembrane segment at 379–400 (LLKNPTFILLCLAGATEATLIT) threads the bilayer. The Extracellular portion of the chain corresponds to 401–420 (GMSTFSPKFLESQFSLSASE). Residues 421-444 (AATLFGYLVVPAGGGGTFLGGFFV) form a helical membrane-spanning segment. The Cytoplasmic portion of the chain corresponds to 445-448 (NKLR). The chain crosses the membrane as a helical span at residues 449–471 (LRGSAVIKFCLFCTVVSLLGILV). At 472 to 580 (FSLHCPSVPM…TSTCQRKPLL (109 aa)) the chain is on the extracellular side. The Kazal-like domain maps to 498–555 (LNLTAPCNAACSCQPEHYSPVCGSDGLMYFSLCHAGCPAATETNVDGQKVYRDCSCIP). An N-linked (GlcNAc...) asparagine glycan is attached at N499. 3 cysteine pairs are disulfide-bonded: C504–C534, C510–C530, and C519–C553. N557 carries N-linked (GlcNAc...) asparagine glycosylation. Residues 581–603 (LVFIFVVIFFTFLSSIPALTATL) traverse the membrane as a helical segment. Residues 604–612 (RCVRDPQRS) lie on the Cytoplasmic side of the membrane. A helical transmembrane segment spans residues 613-638 (FALGIQWIVVRILGGIPGPIAFGWVI). The Extracellular portion of the chain corresponds to 639–671 (DKACLLWQDQCGQQGSCLVYQNSAMSRYILIMG). Residues 672–689 (LLYKVLGVLFFAIACFLY) traverse the membrane as a helical segment. The Cytoplasmic segment spans residues 690-722 (KPLSESSDGLETCLPSQSSAPDSATDSQLQSSV). The tract at residues 703-722 (LPSQSSAPDSATDSQLQSSV) is disordered.

Belongs to the organo anion transporter (TC 2.A.60) family. As to expression, widely expressed. Expressed in placental trophoblasts. Expressed in pancreas, kidney, skeletal muscle, liver, lung, brain, heart, colon, small intestine, ovary, testis, prostate, thymus and spleen. In testis, primarily localized to Leydig cells.

It localises to the cell membrane. The catalysed reaction is 3,3',5-triiodo-L-thyronine(out) + L-glutamate(in) = 3,3',5-triiodo-L-thyronine(in) + L-glutamate(out). It carries out the reaction L-thyroxine(out) + L-glutamate(in) = L-thyroxine(in) + L-glutamate(out). It catalyses the reaction estrone 3-sulfate(out) + L-glutamate(in) = estrone 3-sulfate(in) + L-glutamate(out). The enzyme catalyses taurocholate(out) + L-glutamate(in) = taurocholate(in) + L-glutamate(out). The catalysed reaction is 3,3',5-triiodo-L-thyronine(out) = 3,3',5-triiodo-L-thyronine(in). It carries out the reaction L-thyroxine(out) = L-thyroxine(in). It catalyses the reaction 3,3',5'-triiodo-L-thyronine(out) = 3,3',5'-triiodo-L-thyronine(in). The enzyme catalyses estrone 3-sulfate(out) = estrone 3-sulfate(in). The catalysed reaction is 17beta-estradiol 17-O-(beta-D-glucuronate)(out) = 17beta-estradiol 17-O-(beta-D-glucuronate)(in). It carries out the reaction taurocholate(out) = taurocholate(in). It catalyses the reaction prostaglandin E2(out) = prostaglandin E2(in). Functionally, organic anion antiporter with apparent broad substrate specificity. Recognizes various substrates including thyroid hormones 3,3',5-triiodo-L-thyronine (T3), L-thyroxine (T4) and 3,3',5'-triiodo-L-thyronine (rT3), conjugated steroids such as estrone 3-sulfate and estradiol 17-beta glucuronide, bile acids such as taurocholate and prostanoids such as prostaglandin E2, likely operating in a tissue-specific manner. May be involved in uptake of metabolites from the circulation into organs such as kidney, liver or placenta. Possibly drives the selective transport of thyroid hormones and estrogens coupled to an outward glutamate gradient across the microvillous membrane of the placenta. The transport mechanism, its electrogenicity and potential tissue-specific counterions remain to be elucidated. The protein is Solute carrier organic anion transporter family member 4A1 (SLCO4A1) of Homo sapiens (Human).